Reading from the N-terminus, the 507-residue chain is tRNA(Ile)-lysidine synthase (507 aa).

24-29 (SGGGDS) contributes to the ATP binding site. Residues 370-500 (PPEEAHMAEA…KLLRDFFARL (131 aa)) form the CMP/dCMP-type deaminase domain. His420, Cys445, and Cys448 together coordinate Zn(2+).

The protein belongs to the tRNA(Ile)-lysidine synthase family.

It localises to the cytoplasm. It catalyses the reaction cytidine(34) in tRNA(Ile2) + L-lysine + ATP = lysidine(34) in tRNA(Ile2) + AMP + diphosphate + H(+). In terms of biological role, ligates lysine onto the cytidine present at position 34 of the AUA codon-specific tRNA(Ile) that contains the anticodon CAU, in an ATP-dependent manner. Cytidine is converted to lysidine, thus changing the amino acid specificity of the tRNA from methionine to isoleucine. This Thermus thermophilus (strain ATCC 27634 / DSM 579 / HB8) protein is tRNA(Ile)-lysidine synthase (tilS).